A 261-amino-acid polypeptide reads, in one-letter code: Putative [LysW]-aminoadipate/[LysW]-glutamate kinase (261 aa).

Residues 35 to 36 (GG), arginine 62, and asparagine 162 each bind substrate.

The protein belongs to the acetylglutamate kinase family. LysZ subfamily.

The protein resides in the cytoplasm. It catalyses the reaction [amino-group carrier protein]-C-terminal-N-(1,4-dicarboxybutan-1-yl)-L-glutamine + ATP = [amino-group carrier protein]-C-terminal-N-(1-carboxy-5-phosphooxy-5-oxopentan-1-yl)-L-glutamine + ADP. The enzyme catalyses [amino-group carrier protein]-C-terminal-gamma-(L-glutamyl)-L-glutamate + ATP = [amino-group carrier protein]-C-terminal-gamma-(5-phospho-L-glutamyl)-L-glutamate + ADP. It participates in amino-acid biosynthesis; L-lysine biosynthesis via AAA pathway; L-lysine from L-alpha-aminoadipate (Thermus route): step 2/5. Its pathway is amino-acid biosynthesis; L-arginine biosynthesis. In terms of biological role, involved in both the arginine and lysine biosynthetic pathways. Phosphorylates the LysW-bound precursors glutamate (for arginine biosynthesis), respectively alpha-aminoadipate (for lysine biosynthesis). In Pyrobaculum islandicum (strain DSM 4184 / JCM 9189 / GEO3), this protein is Putative [LysW]-aminoadipate/[LysW]-glutamate kinase.